We begin with the raw amino-acid sequence, 665 residues long: F-box/LRR-repeat protein 3 (665 aa).

One can recognise an F-box domain in the interval 11–60; it reads KPFDLLSEELVFIILDLISPNPSDLKSFSLTCKSFYQLESKHRGSLKPLR. 21 LRR repeats span residues 61 to 81, 82 to 108, 109 to 134, 135 to 159, 160 to 185, 186 to 211, 214 to 235, 236 to 261, 262 to 287, 288 to 312, 313 to 338, 339 to 364, 365 to 390, 391 to 416, 419 to 440, 441 to 466, 467 to 492, 493 to 517, 518 to 543, 544 to 569, and 594 to 619; these read SDYLPRILTRYRNTTDLDLTF, CPRVTDYALSVVGCLSGPTLRSLDLSR, SGSFSAAGLLRLALKCVNLVEIDLSN, ATEMRDADAAVVAEARSLERLKLGR, CKMLTDMGIGCIAVGCKKLNTVSLKW, CVGVGDLGVGLLAVKCKDIRTLDLSY, ITGKCLHDILKLQHLEELLLEG, CFGVDDDSLKSLRHDCKSLKKLDASS, CQNLTHRGLTSLLSGAGYLQRLDLSH, CSSVISLDFASSLKKVSALQSIRLD, GCSVTPDGLKAIGTLCNSLKEVSLSK, CVSVTDEGLSSLVMKLKDLRKLDITC, CRKLSRVSITQIANSCPLLVSLKMES, CSLVSREAFWLIGQKCRLLEELDLTD, IDDEGLKSISSCLSLSSLKLGI, CLNITDKGLSYIGMGCSNLRELDLYR, SVGITDVGISTIAQGCIHLETINISY, CQDITDKSLVSLSKCSLLQTFESRG, CPNITSQGLAAIAVRCKRLAKVDLKK, CPSINDAGLLALAHFSQNLKQINVSD, and SSGLRPSGVAAALLGCGGLRKAKLHA.

The polypeptide is F-box/LRR-repeat protein 3 (FBL3) (Arabidopsis thaliana (Mouse-ear cress)).